We begin with the raw amino-acid sequence, 226 residues long: ATP synthase F(0) complex subunit a (226 aa).

6 helical membrane-spanning segments follow: residues 11–31 (APSMMGLPIVVLIVMFPSILF), 68–88 (WALMLMSLILFIGSTNLLGLL), 97–117 (QLSMNLGMAIPLWAGTVITGF), 138–158 (IPMLVVIETISLFIQPMALAV), 164–184 (ITAGHLLIHLIGGATLALINI), and 189–209 (AFITFIILILLTILEFAVALI).

The protein belongs to the ATPase A chain family. As to quaternary structure, component of the ATP synthase complex composed at least of ATP5F1A/subunit alpha, ATP5F1B/subunit beta, ATP5MC1/subunit c (homooctomer), MT-ATP6/subunit a, MT-ATP8/subunit 8, ATP5ME/subunit e, ATP5MF/subunit f, ATP5MG/subunit g, ATP5MK/subunit k, ATP5MJ/subunit j, ATP5F1C/subunit gamma, ATP5F1D/subunit delta, ATP5F1E/subunit epsilon, ATP5PF/subunit F6, ATP5PB/subunit b, ATP5PD/subunit d, ATP5PO/subunit OSCP. ATP synthase complex consists of a soluble F(1) head domain (subunits alpha(3) and beta(3)) - the catalytic core - and a membrane F(0) domain - the membrane proton channel (subunits c, a, 8, e, f, g, k and j). These two domains are linked by a central stalk (subunits gamma, delta, and epsilon) rotating inside the F1 region and a stationary peripheral stalk (subunits F6, b, d, and OSCP). Interacts with DNAJC30; interaction is direct.

Its subcellular location is the mitochondrion inner membrane. It carries out the reaction H(+)(in) = H(+)(out). In terms of biological role, subunit a, of the mitochondrial membrane ATP synthase complex (F(1)F(0) ATP synthase or Complex V) that produces ATP from ADP in the presence of a proton gradient across the membrane which is generated by electron transport complexes of the respiratory chain. ATP synthase complex consist of a soluble F(1) head domain - the catalytic core - and a membrane F(1) domain - the membrane proton channel. These two domains are linked by a central stalk rotating inside the F(1) region and a stationary peripheral stalk. During catalysis, ATP synthesis in the catalytic domain of F(1) is coupled via a rotary mechanism of the central stalk subunits to proton translocation. With the subunit c (ATP5MC1), forms the proton-conducting channel in the F(0) domain, that contains two crucial half-channels (inlet and outlet) that facilitate proton movement from the mitochondrial intermembrane space (IMS) into the matrix. Protons are taken up via the inlet half-channel and released through the outlet half-channel, following a Grotthuss mechanism. The protein is ATP synthase F(0) complex subunit a of Canis lupus familiaris (Dog).